The following is a 211-amino-acid chain: MSTDLRTRVLSEHHVSRETAASLDLYVAQLTRWQTVKNLVGPATLKEVWHRHIADALQLLSIAPEATRWLDLGSGAGIPGLILALAGKERPGFHVRLVESNARKCAFLSETARLTGAPVTVHNARIEAVIGTLTDTEIVCARALAPLSQLLAWTEPLLTSGTTGLFPKGRDAATELTEAEDEWTFTRDLIPSRTDSQARIVRVTSLSRVDP.

S-adenosyl-L-methionine-binding positions include G73, 126–127 (IE), and R142.

The protein belongs to the methyltransferase superfamily. RNA methyltransferase RsmG family.

The protein resides in the cytoplasm. The enzyme catalyses guanosine(527) in 16S rRNA + S-adenosyl-L-methionine = N(7)-methylguanosine(527) in 16S rRNA + S-adenosyl-L-homocysteine. In terms of biological role, specifically methylates the N7 position of guanine in position 527 of 16S rRNA. The polypeptide is Ribosomal RNA small subunit methyltransferase G (Methylorubrum extorquens (strain CM4 / NCIMB 13688) (Methylobacterium extorquens)).